The primary structure comprises 154 residues: Large ribosomal subunit protein uL22 (154 aa).

It belongs to the universal ribosomal protein uL22 family. Part of the 50S ribosomal subunit.

In terms of biological role, this protein binds specifically to 23S rRNA. It makes multiple contacts with different domains of the 23S rRNA in the assembled 50S subunit and ribosome. The globular domain of the protein is located near the polypeptide exit tunnel on the outside of the subunit, while an extended beta-hairpin is found that lines the wall of the exit tunnel in the center of the 70S ribosome. This chain is Large ribosomal subunit protein uL22, found in Natronomonas pharaonis (strain ATCC 35678 / DSM 2160 / CIP 103997 / JCM 8858 / NBRC 14720 / NCIMB 2260 / Gabara) (Halobacterium pharaonis).